We begin with the raw amino-acid sequence, 267 residues long: Cilia- and flagella-associated protein 300 (267 aa).

Belongs to the CFAP300 family. As to quaternary structure, interacts with DNAAF2.

The protein localises to the cytoplasm. It localises to the cytoskeleton. It is found in the cilium axoneme. Its function is as follows. Cilium- and flagellum-specific protein that plays a role in axonemal structure organization and motility. May play a role in outer and inner dynein arm assembly. The polypeptide is Cilia- and flagella-associated protein 300 (Bos taurus (Bovine)).